A 246-amino-acid chain; its full sequence is Putative 4'-phosphopantetheinyl transferase slr0495 (246 aa).

Aspartate 110 and glutamate 156 together coordinate Mg(2+).

Belongs to the P-Pant transferase superfamily. Gsp/Sfp/HetI/AcpT family. Mg(2+) is required as a cofactor.

In terms of biological role, probably transfers the 4'-phosphopantetheine moiety from coenzyme A (CoA) to a serine residue of a carrier protein domain. The chain is Putative 4'-phosphopantetheinyl transferase slr0495 from Synechocystis sp. (strain ATCC 27184 / PCC 6803 / Kazusa).